We begin with the raw amino-acid sequence, 360 residues long: DNA replication and repair protein RecF (360 aa).

An ATP-binding site is contributed by 30–37 (GHNGSGKT).

It belongs to the RecF family.

The protein localises to the cytoplasm. The RecF protein is involved in DNA metabolism; it is required for DNA replication and normal SOS inducibility. RecF binds preferentially to single-stranded, linear DNA. It also seems to bind ATP. This Shewanella denitrificans (strain OS217 / ATCC BAA-1090 / DSM 15013) protein is DNA replication and repair protein RecF.